The chain runs to 241 residues: Glutathione S-transferase omega-1 (241 aa).

At Ser2 the chain carries N-acetylserine. The GST N-terminal domain occupies 22 to 101; the sequence is GSIRIYSMRF…YLDEAYPGKK (80 aa). Catalysis depends on Cys32, which acts as the Nucleophile. N6-acetyllysine is present on Lys57. Glutathione-binding positions include Lys59, Val72, and 85-86; that span reads ES. The GST C-terminal domain occupies 106 to 230; sequence DPYEKACQKM…DWQGFLELYL (125 aa). Ser129 carries the post-translational modification Phosphoserine. Residues Lys143, Lys148, and Lys152 each carry the N6-acetyllysine modification.

Belongs to the GST superfamily. Omega family. Homodimer. As to expression, ubiquitous. Highest expression in liver, pancreas, skeletal muscle, spleen, thymus, colon, blood leukocyte and heart. Lowest expression in brain, placenta and lung.

It localises to the cytoplasm. It is found in the cytosol. The catalysed reaction is RX + glutathione = an S-substituted glutathione + a halide anion + H(+). It catalyses the reaction L-dehydroascorbate + 2 glutathione = glutathione disulfide + L-ascorbate. The enzyme catalyses methylarsonate + 2 glutathione + H(+) = methylarsonous acid + glutathione disulfide + H2O. Monomethylarsonic acid reductase activity is competitively inhibited by 1-chloro 2,4-dinitrobenzene (CDNB) and by deoxycholate. Functionally, exhibits glutathione-dependent thiol transferase and dehydroascorbate reductase activities. Has S-(phenacyl)glutathione reductase activity. Also has glutathione S-transferase activity. Participates in the biotransformation of inorganic arsenic and reduces monomethylarsonic acid (MMA) and dimethylarsonic acid. This Homo sapiens (Human) protein is Glutathione S-transferase omega-1 (GSTO1).